A 455-amino-acid polypeptide reads, in one-letter code: EP1-like glycoprotein 2 (455 aa).

Positions 1 to 22 (MSRFAILVTLALAIATVSVVIA) are cleaved as a signal peptide. One can recognise a Bulb-type lectin domain in the interval 44 to 163 (EYDASYRFIE…NGKFVWQSFD (120 aa)). N-linked (GlcNAc...) asparagine glycans are attached at residues asparagine 56, asparagine 106, asparagine 191, asparagine 211, asparagine 241, and asparagine 289. Cysteine 374 carries the post-translational modification S-nitrosocysteine. In terms of domain architecture, PAN spans 374-455 (CSGVKGKTVN…NTSSVAYIKY (82 aa)). 2 disulfide bridges follow: cysteine 410–cysteine 432 and cysteine 414–cysteine 420. An N-linked (GlcNAc...) asparagine glycan is attached at asparagine 446.

The protein localises to the secreted. It localises to the cell wall. The polypeptide is EP1-like glycoprotein 2 (Arabidopsis thaliana (Mouse-ear cress)).